The chain runs to 314 residues: Mycothiol acetyltransferase (314 aa).

Residue glutamate 39 participates in 1D-myo-inositol 2-(L-cysteinylamino)-2-deoxy-alpha-D-glucopyranoside binding. An acetyl-CoA-binding site is contributed by 80-82 (LTA). In terms of domain architecture, N-acetyltransferase spans 159–313 (FVCRRFDPIS…PTGELGHEPP (155 aa)). Glutamate 186, lysine 228, and glutamate 237 together coordinate 1D-myo-inositol 2-(L-cysteinylamino)-2-deoxy-alpha-D-glucopyranoside. Acetyl-CoA is bound by residues 241–243 (LGV) and 248–254 (QGQGVGR). Tyrosine 275 serves as a coordination point for 1D-myo-inositol 2-(L-cysteinylamino)-2-deoxy-alpha-D-glucopyranoside.

This sequence belongs to the acetyltransferase family. MshD subfamily. Monomer.

The enzyme catalyses 1D-myo-inositol 2-(L-cysteinylamino)-2-deoxy-alpha-D-glucopyranoside + acetyl-CoA = mycothiol + CoA + H(+). Catalyzes the transfer of acetyl from acetyl-CoA to desacetylmycothiol (Cys-GlcN-Ins) to form mycothiol. In Jonesia denitrificans (strain ATCC 14870 / DSM 20603 / BCRC 15368 / CIP 55.134 / JCM 11481 / NBRC 15587 / NCTC 10816 / Prevot 55134) (Listeria denitrificans), this protein is Mycothiol acetyltransferase.